Reading from the N-terminus, the 551-residue chain is Probable NADH-ubiquinone oxidoreductase C3A11.07, mitochondrial (551 aa).

The N-terminal 37 residues, 1–37, are a transit peptide targeting the mitochondrion; sequence MLFSRSILRGMPKAGIPKSPLALSASRNLRLANSVRF. 93–123 contacts FAD; that stretch reads TLVVLGAGWGATSILRTIDTSLFNVIVVSPR. NAD(+) is bound at residue 255-291; sequence VHTVVVGGGPTGMEFAGEMADFIEDDLKSWYPELADD.

The protein belongs to the NADH dehydrogenase family.

The protein resides in the mitochondrion. The catalysed reaction is a quinone + NADH + H(+) = a quinol + NAD(+). It carries out the reaction a ubiquinone + NADH + H(+) = a ubiquinol + NAD(+). Catalyzes the oxidation of NADH. The chain is Probable NADH-ubiquinone oxidoreductase C3A11.07, mitochondrial from Schizosaccharomyces pombe (strain 972 / ATCC 24843) (Fission yeast).